We begin with the raw amino-acid sequence, 294 residues long: MQEAALGMIGATVGGGGDGDAAVVAEQNRQMKGEIATHPMYDQLLAAHVACLRVATPIDQLPIIEAQLSHSHHLLRSYASTAVGFSHHDRQELDNFLAQYVMVLCSFKEQLQQHVRVHAVEAVMACREIENNLHSLTGATLGEGSGATMSEDEDDLQMDFSSDNSGVDFSGGHDMTGFGPLLPTESERSLMERVRQELKLELKQGFKSRIEDVREEIMRKRRAGKLPGDTTTVLKNWWQQHCKWPYPTEDDKAKLVEETGLQLKQINNWFINQRKRNWHNNSHSLTSLKSKRKH.

Positions 197–217 (ELKLELKQGFKSRIEDVREEI) constitute an ELK domain. A DNA-binding region (homeobox; TALE-type) is located at residues 218–281 (MRKRRAGKLP…NQRKRNWHNN (64 aa)).

It belongs to the TALE/KNOX homeobox family. In terms of tissue distribution, in roots, stems and cotyledons of one-week old seedlings. In mature plants, in young leaves from first level below flowers as well as in flower buds and open flowers.

It localises to the nucleus. Its function is as follows. Possible developmental regulator. This is Homeobox protein HD1 (HD1) from Brassica napus (Rape).